The chain runs to 495 residues: 1-aminocyclopropane-1-carboxylate synthase 6 (495 aa).

Positions 58 and 96 each coordinate substrate. N6-(pyridoxal phosphate)lysine is present on lysine 280. A phosphoserine mark is found at serine 480, serine 483, and serine 488.

Belongs to the class-I pyridoxal-phosphate-dependent aminotransferase family. As to quaternary structure, homodimer and heterodimer. In vivo, the relevance of heterodimerization with other ACS enzymes is however unsure. Interacts with GRF3. It depends on pyridoxal 5'-phosphate as a cofactor. Post-translationally, phosphorylated on serine residue by MAP kinase (MPK6). May be processed at its C-terminus. Expressed in roots and flowers.

It catalyses the reaction S-adenosyl-L-methionine = 1-aminocyclopropane-1-carboxylate + S-methyl-5'-thioadenosine + H(+). It functions in the pathway alkene biosynthesis; ethylene biosynthesis via S-adenosyl-L-methionine; ethylene from S-adenosyl-L-methionine: step 1/2. Functionally, 1-aminocyclopropane-1-carboxylate synthase (ACS) enzymes catalyze the conversion of S-adenosyl-L-methionine (SAM) into 1-aminocyclopropane-1-carboxylate (ACC), a direct precursor of ethylene. Involved in bacterial flagellin-induced ethylene production. The polypeptide is 1-aminocyclopropane-1-carboxylate synthase 6 (ACS6) (Arabidopsis thaliana (Mouse-ear cress)).